We begin with the raw amino-acid sequence, 280 residues long: Pyrethroid hydrolase (280 aa).

Residues Asp-202 and His-230 each act as charge relay system in the active site. The tract at residues 254–280 (YRQTATKAGPDRPAGADGGRADRADLP) is disordered.

It belongs to the AB hydrolase superfamily. As to quaternary structure, monomer.

The enzyme catalyses (-)-trans-permethrin + H2O = (3-phenoxyphenyl)methanol + (1S,3R)-3-(2,2-dichlorovinyl)-2,2-dimethylcyclopropanecarboxylate + H(+). Functionally, catalyzes the hydrolysis of pyrethroids pesticides. Catalyzes the hydrolysis of cypermethrin to equimolar amounts of cyano-3-phenoxybenzyl alcohol and 2,2-dimethyl-3-(2,2-dichlorovinyl)-cyclopropanecarboxylic acid. Hydrolyzes cis-permethrin at approximately equal rate to trans-permethrin. The chain is Pyrethroid hydrolase (pytH) from Sphingobium wenxiniae (strain DSM 21828 / CGMCC 1.7748 / JZ-1).